The following is a 75-amino-acid chain: Sec-independent protein translocase protein TatA (75 aa).

A helical transmembrane segment spans residues 1 to 21 (MGSMSIWHWIVVLAVVLLLFG). The tract at residues 43-75 (MAEDDDAPAKPAEPPRAVPHQATPAPESEKKAV) is disordered.

This sequence belongs to the TatA/E family. In terms of assembly, the Tat system comprises two distinct complexes: a TatABC complex, containing multiple copies of TatA, TatB and TatC subunits, and a separate TatA complex, containing only TatA subunits. Substrates initially bind to the TatABC complex, which probably triggers association of the separate TatA complex to form the active translocon.

Its subcellular location is the cell inner membrane. In terms of biological role, part of the twin-arginine translocation (Tat) system that transports large folded proteins containing a characteristic twin-arginine motif in their signal peptide across membranes. TatA could form the protein-conducting channel of the Tat system. The chain is Sec-independent protein translocase protein TatA from Azorhizobium caulinodans (strain ATCC 43989 / DSM 5975 / JCM 20966 / LMG 6465 / NBRC 14845 / NCIMB 13405 / ORS 571).